The primary structure comprises 309 residues: Solute carrier family 25 member 48 (309 aa).

3 Solcar repeats span residues 3-86 (VFQL…TQRL), 99-209 (CSML…FCNW), and 218-305 (PPPC…SLQF). 6 consecutive transmembrane segments (helical) span residues 9–29 (FLAG…LDTV), 61–81 (GLSF…GFFS), 105–125 (TVAS…VDLV), 186–206 (GAMI…YTLF), 218–238 (PPPC…WVTA), and 281–299 (ATVN…FLGY).

This sequence belongs to the mitochondrial carrier (TC 2.A.29) family.

It is found in the mitochondrion inner membrane. This is Solute carrier family 25 member 48 (slc25a48) from Danio rerio (Zebrafish).